Reading from the N-terminus, the 373-residue chain is Queuine tRNA-ribosyltransferase (373 aa).

The Proton acceptor role is filled by Asp-90. Substrate-binding positions include 90 to 94, Asp-144, Gln-193, and Gly-220; that span reads DSGGF. Residues 251-257 form an RNA binding region; the sequence is GVGTPED. The active-site Nucleophile is the Asp-270. The interval 275–279 is RNA binding; important for wobble base 34 recognition; sequence TRNAR. Residues Cys-308, Cys-310, Cys-313, and His-339 each coordinate Zn(2+).

Belongs to the queuine tRNA-ribosyltransferase family. Homodimer. Within each dimer, one monomer is responsible for RNA recognition and catalysis, while the other monomer binds to the replacement base PreQ1. Zn(2+) is required as a cofactor.

The catalysed reaction is 7-aminomethyl-7-carbaguanine + guanosine(34) in tRNA = 7-aminomethyl-7-carbaguanosine(34) in tRNA + guanine. It participates in tRNA modification; tRNA-queuosine biosynthesis. Functionally, catalyzes the base-exchange of a guanine (G) residue with the queuine precursor 7-aminomethyl-7-deazaguanine (PreQ1) at position 34 (anticodon wobble position) in tRNAs with GU(N) anticodons (tRNA-Asp, -Asn, -His and -Tyr). Catalysis occurs through a double-displacement mechanism. The nucleophile active site attacks the C1' of nucleotide 34 to detach the guanine base from the RNA, forming a covalent enzyme-RNA intermediate. The proton acceptor active site deprotonates the incoming PreQ1, allowing a nucleophilic attack on the C1' of the ribose to form the product. After dissociation, two additional enzymatic reactions on the tRNA convert PreQ1 to queuine (Q), resulting in the hypermodified nucleoside queuosine (7-(((4,5-cis-dihydroxy-2-cyclopenten-1-yl)amino)methyl)-7-deazaguanosine). The protein is Queuine tRNA-ribosyltransferase of Campylobacter jejuni subsp. jejuni serotype O:6 (strain 81116 / NCTC 11828).